We begin with the raw amino-acid sequence, 461 residues long: Complement C1r subcomponent-like protein (461 aa).

An N-terminal signal peptide occupies residues 1-22 (MCWLLLWGILHTCPTQASVLLA). In terms of domain architecture, CUB spans 23 to 139 (QQFPQQLTSP…KGFLALYQAA (117 aa)). Intrachain disulfides connect Cys-71–Cys-89 and Cys-164–Cys-197. The Sushi domain occupies 138-199 (AAVSQPNGDA…RGEEVPECVP (62 aa)). A Peptidase S1 domain is found at 214–453 (TFGSSRAKPG…YVDWIKGVIE (240 aa)). His-252 acts as the Charge relay system in catalysis. N-linked (GlcNAc...) asparagine glycosylation is present at Asn-265. Asp-308 acts as the Charge relay system in catalysis. N-linked (GlcNAc...) asparagine glycosylation occurs at Asn-332. Disulfide bonds link Cys-371/Cys-390 and Cys-401/Cys-431. Catalysis depends on Ser-405, which acts as the Charge relay system.

It belongs to the peptidase S1 family.

Its subcellular location is the secreted. In terms of biological role, mediates the proteolytic cleavage of HP/haptoglobin in the endoplasmic reticulum. This is Complement C1r subcomponent-like protein (C1rl) from Rattus norvegicus (Rat).